We begin with the raw amino-acid sequence, 293 residues long: 4-hydroxy-tetrahydrodipicolinate synthase (293 aa).

Thr45 contributes to the pyruvate binding site. The Proton donor/acceptor role is filled by Tyr133. Lys161 (schiff-base intermediate with substrate) is an active-site residue. A pyruvate-binding site is contributed by Ile203.

Belongs to the DapA family. Homotetramer; dimer of dimers.

Its subcellular location is the cytoplasm. It carries out the reaction L-aspartate 4-semialdehyde + pyruvate = (2S,4S)-4-hydroxy-2,3,4,5-tetrahydrodipicolinate + H2O + H(+). Its pathway is amino-acid biosynthesis; L-lysine biosynthesis via DAP pathway; (S)-tetrahydrodipicolinate from L-aspartate: step 3/4. Functionally, catalyzes the condensation of (S)-aspartate-beta-semialdehyde [(S)-ASA] and pyruvate to 4-hydroxy-tetrahydrodipicolinate (HTPA). The chain is 4-hydroxy-tetrahydrodipicolinate synthase from Shewanella piezotolerans (strain WP3 / JCM 13877).